Here is a 621-residue protein sequence, read N- to C-terminus: TOX high mobility group box family member 4 (621 aa).

2 disordered regions span residues 153 to 227 and 305 to 333; these read LGLS…QKPV and LDPA…ASIE. Threonine 176 is subject to Phosphothreonine. A phosphoserine mark is found at serine 178, serine 181, and serine 182. The span at 183–193 shows a compositional bias: basic and acidic residues; that stretch reads LHEDGVEDFRR. The segment covering 208–218 has biased composition (basic residues); sequence KQKAPKKRKKK. The Nuclear localization signal motif lies at 213-218; that stretch reads KKRKKK. The segment at residues 223–291 is a DNA-binding region (HMG box); it reads PQKPVSAYAL…EYLKALAAYK (69 aa). Residues 307 to 319 are compositionally biased toward pro residues; that stretch reads PAPPSQTPSPPPM. The residue at position 313 (threonine 313) is a Phosphothreonine. At serine 315 the chain carries Phosphoserine. Positions 320–333 are enriched in low complexity; sequence ATVDPASPAPASIE. Position 481 is an asymmetric dimethylarginine (arginine 481). Residues 510–525 show a composition bias toward polar residues; sequence PTVESSPERPMNNSPE. The tract at residues 510 to 529 is disordered; the sequence is PTVESSPERPMNNSPEAHTV. Phosphoserine occurs at positions 533, 550, 552, 560, 562, and 567.

In terms of assembly, component of the PNUTS-PP1 phosphatase complex, composed of PPP1R10/PNUTS, TOX4, WDR82 and PPP1CA or PPP1CB or PPP1CC. Interacts with PPP1R10/PNUTS. Interacts with FOXO1 and CREB1 (increased by cAMP); FOXO1 and CREB1 are required for full induction of TOX4-dependent activity and the interactions are inhibited by insulin. As to expression, expressed in liver (at protein level).

It localises to the nucleus. It is found in the chromosome. In liver, recruited to target gene promoters following treatment with dexamethasone and cAMP. Binding is decreased in presence of insulin. Functionally, transcription factor that modulates cell fate reprogramming from the somatic state to the pluripotent and neuronal fate. In liver, controls the expression of hormone-regulated gluconeogenic genes such as G6PC1 and PCK1. This regulation is independent of the insulin receptor activation. Also acts as a regulatory component of protein phosphatase 1 (PP1) complexes. Component of the PNUTS-PP1 protein phosphatase complex, a PP1 complex that regulates RNA polymerase II transcription pause-release. PNUTS-PP1 also plays a role in the control of chromatin structure and cell cycle progression during the transition from mitosis into interphase. The sequence is that of TOX high mobility group box family member 4 from Homo sapiens (Human).